A 100-amino-acid polypeptide reads, in one-letter code: Urease subunit gamma (100 aa).

It belongs to the urease gamma subunit family. Heterotrimer of UreA (gamma), UreB (beta) and UreC (alpha) subunits. Three heterotrimers associate to form the active enzyme.

The protein localises to the cytoplasm. The enzyme catalyses urea + 2 H2O + H(+) = hydrogencarbonate + 2 NH4(+). Its pathway is nitrogen metabolism; urea degradation; CO(2) and NH(3) from urea (urease route): step 1/1. The sequence is that of Urease subunit gamma from Haemophilus influenzae (strain 86-028NP).